Reading from the N-terminus, the 82-residue chain is Delta-conotoxin SVIE (82 aa).

The first 22 residues, 1 to 22 (MKLTCVMIVAVLFLTTWTFVTA), serve as a signal peptide directing secretion. Residues 23 to 51 (DDSRYGLKNLFPKARHEMKNPEASKLNKR) constitute a propeptide that is removed on maturation. 3 cysteine pairs are disulfide-bonded: cysteine 54-cysteine 69, cysteine 61-cysteine 73, and cysteine 68-cysteine 77. Proline 65 bears the 4-hydroxyproline mark.

Belongs to the conotoxin O1 superfamily. As to expression, expressed by the venom duct.

It localises to the secreted. Functionally, delta-conotoxins bind to site 6 of voltage-gated sodium channels (Nav) and inhibit the inactivation process. Impairs rapid channel inactivation of Nav1.4/SCN4A (Kd=500 nM). Interacts with a conserved hydrophobic triad (YFV) in the domain-4 voltage sensor of sodium channels. In vivo, injection of both native or synthetic peptide induces twitching of back limbs, running in circles, and spastic paralysis. This Conus striatus (Striated cone) protein is Delta-conotoxin SVIE (SO6).